A 278-amino-acid chain; its full sequence is Dehydrogenase/reductase SDR family member 4 (278 aa).

Leu-36 to Val-60 is a binding site for NADP(+). N6-acetyllysine; alternate is present on Lys-92. Lys-92 carries the post-translational modification N6-succinyllysine; alternate. The residue at position 105 (Lys-105) is an N6-acetyllysine. Position 169 (Ser-169) interacts with substrate. The active-site Proton acceptor is Tyr-182. Lys-186 is an NADP(+) binding site. Residue Lys-216 is modified to N6-acetyllysine; alternate. N6-succinyllysine; alternate is present on Lys-216. At Ser-220 the chain carries Phosphoserine. Lys-227 and Lys-234 each carry N6-succinyllysine. The short motif at Ser-276 to Leu-278 is the Peroxisomal targeting signal element.

The protein belongs to the short-chain dehydrogenases/reductases (SDR) family. In terms of assembly, homotetramer.

It localises to the peroxisome. The enzyme catalyses a secondary alcohol + NADP(+) = a ketone + NADPH + H(+). It carries out the reaction 3beta-hydroxy-5beta-pregnane-20-one + NADP(+) = 5beta-pregnan-3,20-dione + NADPH + H(+). The catalysed reaction is 5beta-dihydrotestosterone + NADPH + H(+) = 5beta-androstane-3beta,17beta-diol + NADP(+). It catalyses the reaction 5beta-androstane-3,17-dione + NADPH + H(+) = 3beta-hydroxy-5beta-androstane-17-one + NADP(+). The enzyme catalyses isatin + NADPH + H(+) = 3-hydroxyindolin-2-one + NADP(+). It carries out the reaction lithocholate + NADP(+) = 3-oxo-5beta-cholan-24-oate + NADPH + H(+). The catalysed reaction is 3-oxo-5beta-cholan-24-oate + NADPH + H(+) = isolithocholate + NADP(+). In terms of biological role, NADPH-dependent oxidoreductase which catalyzes the reduction of a variety of compounds bearing carbonyl groups including ketosteroids, alpha-dicarbonyl compounds, aldehydes, aromatic ketones and quinones. Reduces 3-ketosteroids and benzil into 3beta-hydroxysteroids and R-benzoin, respectively, in contrast to the stereoselectivity of non-primate DHRS4s which produce 3alpha-hydroxysteroids and S-benzoin. Diplays low activity toward all-trans-retinal and no activity toward 9-cis-retinal as compared to non-primate mammals. In the reverse reaction, catalyze the NAD-dependent oxidation of 3beta-hydroxysteroids and alcohol, but with much lower efficiency. Involved in the metabolism of 3beta-hydroxysteroids, isatin and xenobiotic carbonyl compounds. This Pongo abelii (Sumatran orangutan) protein is Dehydrogenase/reductase SDR family member 4 (DHRS4).